The sequence spans 628 residues: 1,4-alpha-glucan branching enzyme GlgB (628 aa).

Asp304 acts as the Nucleophile in catalysis. The active-site Proton donor is Glu355.

This sequence belongs to the glycosyl hydrolase 13 family. GlgB subfamily. As to quaternary structure, monomer.

The catalysed reaction is Transfers a segment of a (1-&gt;4)-alpha-D-glucan chain to a primary hydroxy group in a similar glucan chain.. The protein operates within glycan biosynthesis; glycogen biosynthesis. Its function is as follows. Catalyzes the formation of the alpha-1,6-glucosidic linkages in glycogen by scission of a 1,4-alpha-linked oligosaccharide from growing alpha-1,4-glucan chains and the subsequent attachment of the oligosaccharide to the alpha-1,6 position. In Streptococcus mutans serotype c (strain ATCC 700610 / UA159), this protein is 1,4-alpha-glucan branching enzyme GlgB.